Here is a 130-residue protein sequence, read N- to C-terminus: Histone H2A type 1-F (130 aa).

Residues 1 to 22 (MSGRGKQGGKARAKAKTRSSRA) form a disordered region. At Ser2 the chain carries Phosphoserine; by RPS6KA5. Arg4 is subject to Citrulline; alternate. Residue Arg4 is modified to Symmetric dimethylarginine; by PRMT5; alternate. Position 6 is an N6-(2-hydroxyisobutyryl)lysine; alternate (Lys6). The residue at position 6 (Lys6) is an N6-(beta-hydroxybutyryl)lysine; alternate. Residues 7–19 (QGGKARAKAKTRS) are compositionally biased toward basic residues. Lys10 is subject to N6-(2-hydroxyisobutyryl)lysine. At Lys10 the chain carries N6-lactoyllysine; alternate. At Lys37 the chain carries N6-(2-hydroxyisobutyryl)lysine; alternate. The residue at position 37 (Lys37) is an N6-(beta-hydroxybutyryl)lysine; alternate. An N6-crotonyllysine; alternate modification is found at Lys37. N6-(2-hydroxyisobutyryl)lysine occurs at positions 75, 76, and 96. The residue at position 96 (Lys96) is an N6-glutaryllysine; alternate. The residue at position 105 (Gln105) is an N5-methylglutamine. The residue at position 119 (Lys119) is an N6-(2-hydroxyisobutyryl)lysine; alternate. N6-crotonyllysine; alternate is present on residues Lys119 and Lys120. An N6-glutaryllysine; alternate mark is found at Lys119 and Lys120. Lys120 is modified (N6-(beta-hydroxybutyryl)lysine; alternate). Residue Lys120 forms a Glycyl lysine isopeptide (Lys-Gly) (interchain with G-Cter in ubiquitin); alternate linkage. Thr121 bears the Phosphothreonine; by DCAF1 mark. Lys126 is subject to N6-(beta-hydroxybutyryl)lysine; alternate. Lys126 is subject to N6-crotonyllysine; alternate. Lys126 is subject to N6-glutaryllysine; alternate.

The protein belongs to the histone H2A family. In terms of assembly, the nucleosome is a histone octamer containing two molecules each of H2A, H2B, H3 and H4 assembled in one H3-H4 heterotetramer and two H2A-H2B heterodimers. The octamer wraps approximately 147 bp of DNA. Post-translationally, deiminated on Arg-4 in granulocytes upon calcium entry. In terms of processing, monoubiquitination of Lys-120 (H2AK119Ub) by RING1, TRIM37 and RNF2/RING2 complex gives a specific tag for epigenetic transcriptional repression and participates in X chromosome inactivation of female mammals. It is involved in the initiation of both imprinted and random X inactivation. Ubiquitinated H2A is enriched in inactive X chromosome chromatin. Ubiquitination of H2A functions downstream of methylation of 'Lys-27' of histone H3 (H3K27me). H2AK119Ub by RNF2/RING2 can also be induced by ultraviolet and may be involved in DNA repair. Following DNA double-strand breaks (DSBs), it is ubiquitinated through 'Lys-63' linkage of ubiquitin moieties by the E2 ligase UBE2N and the E3 ligases RNF8 and RNF168, leading to the recruitment of repair proteins to sites of DNA damage. Ubiquitination at Lys-14 and Lys-16 (H2AK13Ub and H2AK15Ub, respectively) in response to DNA damage is initiated by RNF168 that mediates monoubiquitination at these 2 sites, and 'Lys-63'-linked ubiquitin are then conjugated to monoubiquitin; RNF8 is able to extend 'Lys-63'-linked ubiquitin chains in vitro. H2AK119Ub and ionizing radiation-induced 'Lys-63'-linked ubiquitination (H2AK13Ub and H2AK15Ub) are distinct events. Phosphorylation on Ser-2 (H2AS1ph) is enhanced during mitosis. Phosphorylation on Ser-2 by RPS6KA5/MSK1 directly represses transcription. Acetylation of H3 inhibits Ser-2 phosphorylation by RPS6KA5/MSK1. Phosphorylation at Thr-121 (H2AT120ph) by DCAF1 is present in the regulatory region of many tumor suppresor genes and down-regulates their transcription. Post-translationally, symmetric dimethylation on Arg-4 by the PRDM1/PRMT5 complex may play a crucial role in the germ-cell lineage. In terms of processing, glutamine methylation at Gln-105 (H2AQ104me) by FBL is specifically dedicated to polymerase I. It is present at 35S ribosomal DNA locus and impairs binding of the FACT complex. Crotonylation (Kcr) is specifically present in male germ cells and marks testis-specific genes in post-meiotic cells, including X-linked genes that escape sex chromosome inactivation in haploid cells. Crotonylation marks active promoters and enhancers and confers resistance to transcriptional repressors. It is also associated with post-meiotically activated genes on autosomes. Post-translationally, hydroxybutyrylation of histones is induced by starvation. In terms of processing, lactylated in macrophages by EP300/P300 by using lactoyl-CoA directly derived from endogenous or exogenous lactate, leading to stimulates gene transcription.

The protein localises to the nucleus. Its subcellular location is the chromosome. Functionally, core component of nucleosome. Nucleosomes wrap and compact DNA into chromatin, limiting DNA accessibility to the cellular machineries which require DNA as a template. Histones thereby play a central role in transcription regulation, DNA repair, DNA replication and chromosomal stability. DNA accessibility is regulated via a complex set of post-translational modifications of histones, also called histone code, and nucleosome remodeling. The chain is Histone H2A type 1-F (Hist1h2af) from Mus musculus (Mouse).